The chain runs to 448 residues: Portal protein (448 aa).

The tract at residues 1-25 (MAKRGRKPKELVPGPGSIDPSDVPK) is disordered.

This sequence belongs to the P23virus portal protein family. In terms of assembly, homododecamer. Interacts with the capsid protein. Interacts with the terminase large subunit; this interaction allows the packaging of viral DNA.

The protein resides in the virion. In terms of biological role, forms the portal vertex of the capsid. This portal plays critical roles in head assembly, genome packaging, neck/tail attachment, and genome ejection. The portal protein multimerizes as a single ring-shaped homododecamer arranged around a central channel. Forms the portal vertex of the capsid. This portal plays critical roles in head assembly, genome packaging, neck/tail attachment, and genome ejection. This is Portal protein from Thermus thermophilus (Thermus thermophilus phage G20c).